The following is a 190-amino-acid chain: MTATPKFAHVVLQTSRFEAMRDWYCTVLDAHVVYEGHGLCFITFDEEHHRVALLGAPTALEPRNPGAAGMHHTAYTFDTLGDLLDRYESLKSKGIEPKVPIQHGVTTSLYYQDPDGNFVELQIDNFSTPDEATAYMNGPEYGGNPVGVSFDPVLIPQALSAGTPVDRITTHAWALETTPDLPNPMIALTS.

Residues 6-124 form the VOC domain; that stretch reads KFAHVVLQTS…DGNFVELQID (119 aa). Fe cation contacts are provided by His9, His72, and Glu120.

It belongs to the extradiol ring-cleavage dioxygenase family. In terms of assembly, homohexamer. Requires Fe(2+) as cofactor.

The catalysed reaction is biphenyl-2,3-diol + O2 = 2-hydroxy-6-oxo-6-phenylhexa-2,4-dienoate + H(+). The protein operates within xenobiotic degradation; biphenyl degradation; 2-hydroxy-2,4-pentadienoate and benzoate from biphenyl: step 3/4. The chain is Biphenyl-2,3-diol 1,2-dioxygenase 2 (bphC2) from Rhodococcus globerulus.